Here is a 295-residue protein sequence, read N- to C-terminus: Aquaporin NIP2-1 (295 aa).

The next 2 helical transmembrane spans lie at valine 49–isoleucine 69 and serine 83–alanine 103. Positions asparagine 106–alanine 108 match the NPA 1 motif. Helical transmembrane passes span valine 124 to leucine 146, serine 164 to threonine 184, and leucine 192 to serine 212. Residues asparagine 217 to alanine 219 carry the NPA 2 motif. A helical membrane pass occupies residues leucine 230 to tryptophan 250.

This sequence belongs to the MIP/aquaporin (TC 1.A.8) family. NIP (TC 1.A.8.12) subfamily.

It is found in the membrane. Functionally, aquaporins facilitate the transport of water and small neutral solutes across cell membranes. The sequence is that of Aquaporin NIP2-1 (NIP2-1) from Zea mays (Maize).